Consider the following 1102-residue polypeptide: Probable ubiquitin-conjugating enzyme E2 23 (1102 aa).

6 disordered regions span residues 1–20 (MEHE…DSSV), 25–111 (ASLS…DGNY), 396–418 (LPKV…PVHE), 579–602 (SPGN…SHQE), 661–710 (DESV…DIYA), and 760–800 (QAES…KNIL). Residues 31 to 44 (DSEHPNIYRQDIVK) are compositionally biased toward basic and acidic residues. Positions 59–88 (GDSDSDSDISDEEEDDDDDEDNDDDDEDVE) are enriched in acidic residues. The segment covering 579-596 (SPGNSFEEATQQDNGYQD) has biased composition (polar residues). The span at 779-800 (SKVNVTDNCESKGTQANAKNIL) shows a compositional bias: polar residues. The region spanning 850-1010 (QWFKKVDQDW…TFLLNCKTMM (161 aa)) is the UBC core domain. The Glycyl thioester intermediate role is filled by cysteine 936.

Belongs to the ubiquitin-conjugating enzyme family.

It carries out the reaction S-ubiquitinyl-[E1 ubiquitin-activating enzyme]-L-cysteine + [E2 ubiquitin-conjugating enzyme]-L-cysteine = [E1 ubiquitin-activating enzyme]-L-cysteine + S-ubiquitinyl-[E2 ubiquitin-conjugating enzyme]-L-cysteine.. The protein operates within protein modification; protein ubiquitination. In terms of biological role, accepts the ubiquitin from the E1 complex and catalyzes its covalent attachment to other proteins. In Arabidopsis thaliana (Mouse-ear cress), this protein is Probable ubiquitin-conjugating enzyme E2 23 (UBC23).